The following is a 477-amino-acid chain: MFRRGDNSNFNVQNSFFLPLEYEYTVKDNVPSKKKSSIGFFPLDDSLFTSKNNSGHHKSEQLHRGNAETIRSQFGTDAVPIRIDEKEGKWDRIQDDNSSNLNYQINNSNDPASSGKYTQSIDCNHIAESKFSKKNGNIDSLRSNSATFMLNTADEDVIEFSFDDNVPYAELLSGATLEKCSLTLNEINKKLFNTLYDFRVSKDNPEENLVELILPNCVVLLNFFEDIELLADSSDEAFEKSTFINTIEFIVHDIWVETLIKNINLLQMFDADLKCYNDKYIICKLKGQYPSTNIVDIMCRLKHFSNSILETFKFGIELKEQDQCHNRNTIINYVLFSRVFSTIVLEIQKCFILIVKFMYSVNFLEKFSDEVFLSFIEILIKIVFEHQIPQLFLGIDEIIQLWLKNNEGKRQQLLSAWCNGTVQDMKQSQQRESSNAESESITSSTEEDEEGLQFNKWDVIEPFIDNIKALNQSKSHM.

The disordered stretch occupies residues 428 to 452 (SQQRESSNAESESITSSTEEDEEGL). The span at 432 to 444 (ESSNAESESITSS) shows a compositional bias: low complexity.

Its subcellular location is the cytoplasm. Required for spore wall assembly and ascus formation. The protein is Sporulation-specific protein 77 (SPO77) of Saccharomyces cerevisiae (strain ATCC 204508 / S288c) (Baker's yeast).